The sequence spans 210 residues: Thymidylate kinase (210 aa).

Residue 11-18 coordinates ATP; it reads GVDGSGKS.

This sequence belongs to the thymidylate kinase family.

It catalyses the reaction dTMP + ATP = dTDP + ADP. Phosphorylation of dTMP to form dTDP in both de novo and salvage pathways of dTTP synthesis. The polypeptide is Thymidylate kinase (Mycoplasmoides gallisepticum (strain R(low / passage 15 / clone 2)) (Mycoplasma gallisepticum)).